The primary structure comprises 687 residues: Leucine-rich repeat and fibronectin type III domain-containing protein 1-like protein (687 aa).

The signal sequence occupies residues Met1 to Gly17. An LRRNT domain is found at Gln18–Arg51. The Extracellular segment spans residues Gln18–Met527. LRR repeat units lie at residues Arg52–Asn73, Ser76–Asp97, Arg100–Gly121, Asn124–Asp145, Thr149–Arg170, Asn173–Asn194, and Lys197–Leu218. An N-linked (GlcNAc...) asparagine glycan is attached at Asn73. An LRRCT domain is found at Asn241–Pro287. One can recognise an Ig-like domain in the interval Pro287–Ser376. Cys309 and Cys358 are joined by a disulfide. N-linked (GlcNAc...) asparagine glycans are attached at residues Asn331, Asn340, Asn346, Asn383, Asn410, and Asn450. The tract at residues Ser384–Thr412 is disordered. The span at Ile398 to Thr412 shows a compositional bias: polar residues. Residues Gln415 to Thr510 form the Fibronectin type-III domain. Residues Ile528–Ile548 form a helical membrane-spanning segment. Over Arg549–Ile687 the chain is Cytoplasmic. Disordered regions lie at residues Gly563–Gly601 and Glu630–Ile687. 2 stretches are compositionally biased toward polar residues: residues Ala565–Gly576 and Glu657–Val672. Residues Ser673–Ile687 are compositionally biased toward basic and acidic residues.

It belongs to the LRFN family.

It is found in the membrane. It localises to the synapse. May be involved in the regulation of excitatory synapses. This is Leucine-rich repeat and fibronectin type III domain-containing protein 1-like protein (lrfn1l) from Danio rerio (Zebrafish).